The chain runs to 332 residues: L-lactate dehydrogenase (332 aa).

NAD(+) contacts are provided by residues 29 to 57 and Arg-99; that span reads GQVGMASAFSILAQNVSKEVCLIDVCADK. Positions 106, 138, and 169 each coordinate substrate. Position 138 (Asn-138) interacts with NAD(+). Residue His-193 is the Proton acceptor of the active site. Position 248 (Thr-248) interacts with substrate.

The protein belongs to the LDH/MDH superfamily. LDH family. As to quaternary structure, homotetramer.

It is found in the cytoplasm. The catalysed reaction is (S)-lactate + NAD(+) = pyruvate + NADH + H(+). It participates in fermentation; pyruvate fermentation to lactate; (S)-lactate from pyruvate: step 1/1. The protein is L-lactate dehydrogenase of Drosophila melanogaster (Fruit fly).